Consider the following 775-residue polypeptide: Subtilisin-like protease SBT1.5 (775 aa).

Positions 1–19 (MAFFFYFFFLLTLSSPSSS) are cleaved as a signal peptide. Positions 20 to 103 (ASSSNSLTYI…VIPEQVRHLH (84 aa)) are cleaved as a propeptide — activation peptide. Positions 27-103 (TYIVHVDHEA…VIPEQVRHLH (77 aa)) constitute an Inhibitor I9 domain. Residues 107-617 (SPEFLGLRST…SGHVHPTKAM (511 aa)) form the Peptidase S8 domain. D137 serves as the catalytic Charge relay system. Residue N196 is glycosylated (N-linked (GlcNAc...) asparagine). Residue H210 is the Charge relay system of the active site. One can recognise a PA domain in the interval 367–459 (MYPLVYGGSL…VGASGGDEIR (93 aa)). Catalysis depends on S549, which acts as the Charge relay system. 3 N-linked (GlcNAc...) asparagine glycosylation sites follow: N599, N638, and N762.

Belongs to the peptidase S8 family.

The protein resides in the secreted. This Arabidopsis thaliana (Mouse-ear cress) protein is Subtilisin-like protease SBT1.5.